Reading from the N-terminus, the 70-residue chain is Phycobilisome 8.1 kDa linker polypeptide, phycocyanin-associated, rod (70 aa).

One can recognise a CpcD-like domain in the interval 5–63 (SRSFQVEVSGLHQNEVTNQNNYPIRSSGSVFITIPFSRFNEELQRINRLGGKIVNIQPL).

The protein belongs to the phycobilisome linker protein family.

The protein localises to the cellular thylakoid membrane. Rod linker protein, associated with phycocyanin. Linker polypeptides determine the state of aggregation and the location of the disk-shaped phycobiliprotein units within the phycobilisome and modulate their spectroscopic properties in order to mediate a directed and optimal energy transfer. In Microchaete diplosiphon (Fremyella diplosiphon), this protein is Phycobilisome 8.1 kDa linker polypeptide, phycocyanin-associated, rod (cpcD3).